The sequence spans 180 residues: Insulin-like growth factor 2 (180 aa).

Positions 1-24 (MGIPMGKSMLVLLTFLAFASCCIA) are cleaved as a signal peptide. The segment at 25–52 (AYRPSETLCGGELVDTLQFVCGDRGFYF) is b. Disulfide bonds link Cys33-Cys71, Cys45-Cys84, and Cys70-Cys75. Residues 53–64 (SRPASRVSRRSR) are c. The a stretch occupies residues 65 to 85 (GIVEECCFRSCDLALLETYCA). Residues 86-91 (TPAKSE) are d. The propeptide at 92-180 (RDVSTPPTVL…APPEMASNRK (89 aa)) is e peptide. Residues Thr96, Thr99, and Thr163 are each glycosylated (O-linked (GalNAc...) threonine). Positions 161-180 (LPTQDPAHGGAPPEMASNRK) are disordered.

It belongs to the insulin family. Interacts with MYORG; this interaction is required for IGF2 secretion. Interacts with integrins ITGAV:ITGB3 and ITGA6:ITGB4; integrin-binding is required for IGF2 signaling. Interacts with IGFBP2. In terms of processing, O-glycosylated with core 1 or possibly core 8 glycans. Thr-96 is a minor glycosylation site compared to Thr-99. Proteolytically processed by PCSK4, proIGF2 is cleaved at Arg-128 and Arg-92 to generate big-IGF2 and mature IGF2. In terms of tissue distribution, expressed in heart, placenta, lung, liver, muscle, kidney, tongue, limb, eye and pancreas.

The protein resides in the secreted. The insulin-like growth factors possess growth-promoting activity. Major fetal growth hormone in mammals. Plays a key role in regulating fetoplacental development. IGF2 is influenced by placental lactogen. Also involved in tissue differentiation. In adults, involved in glucose metabolism in adipose tissue, skeletal muscle and liver. Acts as a ligand for integrin which is required for IGF2 signaling. Positively regulates myogenic transcription factor MYOD1 function by facilitating the recruitment of transcriptional coactivators, thereby controlling muscle terminal differentiation. Inhibits myoblast differentiation and modulates metabolism via increasing the mitochondrial respiration rate. Functionally, preptin undergoes glucose-mediated co-secretion with insulin, and acts as a physiological amplifier of glucose-mediated insulin secretion. Exhibits osteogenic properties by increasing osteoblast mitogenic activity through phosphoactivation of MAPK1 and MAPK3. The protein is Insulin-like growth factor 2 of Homo sapiens (Human).